Consider the following 68-residue polypeptide: P21 prophage-derived head-stabilizing protein (68 aa).

The protein belongs to the lambda phage gpW family.

The protein is P21 prophage-derived head-stabilizing protein of Escherichia coli O6:H1 (strain CFT073 / ATCC 700928 / UPEC).